The sequence spans 545 residues: Serine/threonine-protein kinase PAK 1 (545 aa).

Positions 1 to 77 are disordered; that stretch reads MSNNGLDIQD…KEKERPEISL (77 aa). N-acetylserine is present on serine 2. Serine 21 carries the post-translational modification Phosphoserine; by PKB and autocatalysis. A Phosphoserine; by autocatalysis modification is found at serine 57. The span at 68–77 shows a compositional bias: basic and acidic residues; it reads KEKERPEISL. The autoregulatory region stretch occupies residues 70–140; sequence KERPEISLPS…YNSKKTSNSQ (71 aa). The CRIB domain occupies 75 to 88; that stretch reads ISLPSDFEHTIHVG. The tract at residues 75 to 105 is GTPase-binding; sequence ISLPSDFEHTIHVGFDAVTGEFTGMPEQWAR. Threonine 84 is subject to Phosphothreonine; by OXSR1. Serine 115 carries the post-translational modification Phosphoserine. Tyrosine 131 and tyrosine 142 each carry phosphotyrosine. Phosphoserine; by autocatalysis is present on serine 144. Residue serine 149 is modified to Phosphoserine. At tyrosine 153 the chain carries Phosphotyrosine; by JAK2. The segment at 159-198 is disordered; sequence LNVKAVSETPAVPPVSEDEDDDDDDATPPPVIAPRPEHTK. Serine 174 carries the phosphoserine modification. A compositionally biased stretch (acidic residues) spans 174–184; it reads SEDEDDDDDDA. Threonine 185 carries the phosphothreonine modification. A Phosphoserine; by autocatalysis modification is found at serine 199. Tyrosine 201 carries the post-translational modification Phosphotyrosine; by JAK2. Serine 204 bears the Phosphoserine mark. A disordered region spans residues 211–251; it reads VTPTRDVATSPISPTENNTTPPDALTRNTEKQKKKPKMSDE. A phosphothreonine mark is found at threonine 212 and threonine 219. Serine 220 and serine 223 each carry phosphoserine. Polar residues predominate over residues 220–231; sequence SPISPTENNTTP. Threonine 225, threonine 229, and threonine 230 each carry phosphothreonine. The Protein kinase domain maps to 270-521; sequence YTRFEKIGQG…AKELLQHQFL (252 aa). 276–284 is a binding site for ATP; that stretch reads IGQGASGTV. Tyrosine 285 is modified (phosphotyrosine; by JAK2). Residues lysine 299 and 345-347 each bind ATP; that span reads EYL. Aspartate 389 acts as the Proton acceptor in catalysis. Threonine 423 carries the post-translational modification Phosphothreonine; by autocatalysis, BRSK2 and PDPK1.

This sequence belongs to the protein kinase superfamily. STE Ser/Thr protein kinase family. STE20 subfamily. In terms of assembly, homodimer; homodimerization results in autoinhibition. Active as monomer. Interacts with GIT1. Component of cytoplasmic complexes, which also contains PXN, ARHGEF7 and GIT1. Interacts with NISCH. Interacts with DVL1; mediates the formation of a DVL1, MUSK and PAK1 ternary complex involved in AChR clustering. Binds to the caspase-cleaved p110 isoform of CDC2L1 and CDC2L2, p110C, but not the full-length proteins. Interacts with ARHGEF7. Interacts tightly with GTP-bound but not GDP-bound CDC42/P21 and RAC1. Interacts with SCRIB. Interacts with PDPK1. Interacts (via kinase domain) with RAF1. Interacts with NCK1 and NCK2. Interacts with TBCB. Interacts with BRSK2. Interacts with SNAI1. Interacts with CIB1 isoform 2. Interacts with CIB1 (via N-terminal region); the interaction is direct, promotes PAK1 activity and occurs in a calcium-dependent manner. Interacts with INPP5K. Interacts with gamma-tubulin. Interacts with RHOU; the interaction promotes PAK1 activation. Requires Mg(2+) as cofactor. Post-translationally, autophosphorylated in trans, meaning that in a dimer, one kinase molecule phosphorylates the other one. Activated by autophosphorylation at Thr-423 in response to a conformation change, triggered by interaction with GTP-bound CDC42 or RAC1. Activated by phosphorylation at Thr-423 by BRSK2 and by PDPK1. Phosphorylated by JAK2 in response to PRL; this increases PAK1 kinase activity. Phosphorylated at Ser-21 by PKB/AKT; this reduces interaction with NCK1 and association with focal adhesion sites. Upon DNA damage, phosphorylated at Thr-212 and translocates to the nucleoplasm. Phosphorylated at tyrosine residues, which can be enhanced by NTN1. As to expression, overexpressed in gastric cancer cells and tissues (at protein level).

It localises to the cytoplasm. The protein resides in the cell junction. It is found in the focal adhesion. The protein localises to the cell projection. Its subcellular location is the lamellipodium. It localises to the cell membrane. The protein resides in the ruffle membrane. It is found in the invadopodium. The protein localises to the nucleus. Its subcellular location is the nucleoplasm. It localises to the chromosome. The protein resides in the cytoskeleton. It is found in the microtubule organizing center. The protein localises to the centrosome. It catalyses the reaction L-seryl-[protein] + ATP = O-phospho-L-seryl-[protein] + ADP + H(+). The enzyme catalyses L-threonyl-[protein] + ATP = O-phospho-L-threonyl-[protein] + ADP + H(+). Activated by binding small G proteins. Binding of GTP-bound CDC42 or RAC1 to the autoregulatory region releases monomers from the autoinhibited dimer, and enables activation by phosphorylation of Thr-423. Phosphorylation of Thr-84 by OXSR1 inhibits activation. Its function is as follows. Protein kinase involved in intracellular signaling pathways downstream of integrins and receptor-type kinases that plays an important role in cytoskeleton dynamics, in cell adhesion, migration, proliferation, apoptosis, mitosis, and in vesicle-mediated transport processes. Can directly phosphorylate BAD and protects cells against apoptosis. Activated by interaction with CDC42 and RAC1. Functions as a GTPase effector that links the Rho-related GTPases CDC42 and RAC1 to the JNK MAP kinase pathway. Phosphorylates and activates MAP2K1, and thereby mediates activation of downstream MAP kinases. Involved in the reorganization of the actin cytoskeleton, actin stress fibers and of focal adhesion complexes. Phosphorylates the tubulin chaperone TBCB and thereby plays a role in the regulation of microtubule biogenesis and organization of the tubulin cytoskeleton. Plays a role in the regulation of insulin secretion in response to elevated glucose levels. Part of a ternary complex that contains PAK1, DVL1 and MUSK that is important for MUSK-dependent regulation of AChR clustering during the formation of the neuromuscular junction (NMJ). Activity is inhibited in cells undergoing apoptosis, potentially due to binding of CDC2L1 and CDC2L2. Phosphorylates MYL9/MLC2. Phosphorylates RAF1 at 'Ser-338' and 'Ser-339' resulting in: activation of RAF1, stimulation of RAF1 translocation to mitochondria, phosphorylation of BAD by RAF1, and RAF1 binding to BCL2. Phosphorylates SNAI1 at 'Ser-246' promoting its transcriptional repressor activity by increasing its accumulation in the nucleus. In podocytes, promotes NR3C2 nuclear localization. Required for atypical chemokine receptor ACKR2-induced phosphorylation of LIMK1 and cofilin (CFL1) and for the up-regulation of ACKR2 from endosomal compartment to cell membrane, increasing its efficiency in chemokine uptake and degradation. In synapses, seems to mediate the regulation of F-actin cluster formation performed by SHANK3, maybe through CFL1 phosphorylation and inactivation. Plays a role in RUFY3-mediated facilitating gastric cancer cells migration and invasion. In response to DNA damage, phosphorylates MORC2 which activates its ATPase activity and facilitates chromatin remodeling. In neurons, plays a crucial role in regulating GABA(A) receptor synaptic stability and hence GABAergic inhibitory synaptic transmission through its role in F-actin stabilization. In hippocampal neurons, necessary for the formation of dendritic spines and excitatory synapses; this function is dependent on kinase activity and may be exerted by the regulation of actomyosin contractility through the phosphorylation of myosin II regulatory light chain (MLC). Along with GIT1, positively regulates microtubule nucleation during interphase. Phosphorylates FXR1, promoting its localization to stress granules and activity. Phosphorylates ILK on 'Thr-173' and 'Ser-246', promoting nuclear export of ILK. The polypeptide is Serine/threonine-protein kinase PAK 1 (Homo sapiens (Human)).